Reading from the N-terminus, the 356-residue chain is Histidinol-phosphate aminotransferase (356 aa).

N6-(pyridoxal phosphate)lysine is present on K211.

This sequence belongs to the class-II pyridoxal-phosphate-dependent aminotransferase family. Histidinol-phosphate aminotransferase subfamily. Homodimer. It depends on pyridoxal 5'-phosphate as a cofactor.

The catalysed reaction is L-histidinol phosphate + 2-oxoglutarate = 3-(imidazol-4-yl)-2-oxopropyl phosphate + L-glutamate. The protein operates within amino-acid biosynthesis; L-histidine biosynthesis; L-histidine from 5-phospho-alpha-D-ribose 1-diphosphate: step 7/9. The sequence is that of Histidinol-phosphate aminotransferase from Blochmanniella floridana.